The sequence spans 445 residues: MTTILPNLPVGQKVGIAFSGGLDTSAALLWMRNKGAIPYAYTANLGQPDEDDYDAIPRRAMEYGAENARLIDCRAQLVAEGIAALQAGAFHVSTAGITYFNTTPIGRAVTGTMLVAAMKEDGVNIWGDGSTYKGNDIERFYRYGLLTNPDLKIYKPWLDQLFIDELGGRAEMSEYMRQAGFDYKMSAEKAYSTDSNMLGATHEAKDLEQLNSGIRIVKPIMGVAFWRDDVAVKAEEVSVRFEEGQPVALNGVEYADPVELMLEANRIGGRHGLGMSDQIENRIIEAKSRGIYEAPGLALLFIAYERLVTGIHNEDTIEQYRESGRKLGRLLYQGRWFDPQAIMLRETAQRWVARAVTGEVTLELRRGNDYSLLNTESPNLTYAPERLSMEKVENAPFTPADRIGQLTMRNLDITDTRDKLFTYVKTGLLASSGGAALPQLKDAKK.

ATP is bound by residues 17-25 and Ala43; that span reads AFSGGLDTS. Position 99 (Tyr99) interacts with L-citrulline. Gly129 and Thr131 together coordinate ATP. Residues Thr131, Asn135, and Asp136 each coordinate L-aspartate. Asn135 contacts L-citrulline. Position 136 (Asp136) interacts with ATP. L-citrulline-binding residues include Arg139 and Ser192. Residue Asp194 participates in ATP binding. The L-citrulline site is built by Thr201, Glu203, and Glu280.

It belongs to the argininosuccinate synthase family. Type 2 subfamily. As to quaternary structure, homotetramer.

It localises to the cytoplasm. The catalysed reaction is L-citrulline + L-aspartate + ATP = 2-(N(omega)-L-arginino)succinate + AMP + diphosphate + H(+). It functions in the pathway amino-acid biosynthesis; L-arginine biosynthesis; L-arginine from L-ornithine and carbamoyl phosphate: step 2/3. The protein is Argininosuccinate synthase of Bordetella petrii (strain ATCC BAA-461 / DSM 12804 / CCUG 43448).